The following is a 222-amino-acid chain: Glutathione S-transferase A2 (222 aa).

At Ala2 the chain carries N-acetylalanine. One can recognise a GST N-terminal domain in the interval 3 to 83; that stretch reads GKPVLHYFNA…YIATKYDLYG (81 aa). Lys4 carries the N6-succinyllysine modification. Glutathione contacts are provided by residues Tyr9, Lys45, 54–55, and 67–68; these read QV and QT. Positions 85–208 constitute a GST C-terminal domain; sequence DMKERALIDM…HPGSQRKPPL (124 aa).

It belongs to the GST superfamily. Alpha family. Homodimer. Heterodimer of GSTA1 and GSTA2. Expressed in the kidney.

It carries out the reaction RX + glutathione = an S-substituted glutathione + a halide anion + H(+). Functionally, catalyzes the conjugation of glutathione to a large variety of electrophilic compounds. The chain is Glutathione S-transferase A2 (Gsta2) from Mus musculus (Mouse).